The sequence spans 201 residues: Guanylyl cyclase-activating protein 1 (201 aa).

The N-myristoyl glycine moiety is linked to residue glycine 2. Residue asparagine 3 is modified to Deamidated asparagine. 4 consecutive EF-hand domains span residues serine 31 to serine 49, serine 51 to glycine 86, lysine 87 to isoleucine 122, and threonine 131 to leucine 166. Ca(2+) contacts are provided by aspartate 64, asparagine 66, aspartate 68, tyrosine 70, glutamate 75, aspartate 100, aspartate 102, asparagine 104, cysteine 106, glutamate 111, aspartate 144, asparagine 146, aspartate 148, glutamate 150, and glutamate 155.

In terms of assembly, homodimer. In terms of tissue distribution, in the retina, it is expressed in rod and cone photoreceptors.

It is found in the membrane. It localises to the photoreceptor inner segment. The protein resides in the cell projection. The protein localises to the cilium. Its subcellular location is the photoreceptor outer segment. Its function is as follows. Stimulates retinal guanylyl cyclase when free calcium ions concentration is low and inhibits guanylyl cyclase when free calcium ions concentration is elevated. This Ca(2+)-sensitive regulation of retinal guanylyl cyclase is a key event in recovery of the dark state of rod photoreceptors following light exposure. May be involved in cone photoreceptor light response and recovery of response in bright light. The chain is Guanylyl cyclase-activating protein 1 (GUCA1A) from Homo sapiens (Human).